The primary structure comprises 409 residues: Elongation factor Tu (409 aa).

One can recognise a tr-type G domain in the interval 10-214; the sequence is KPHVNIGTIG…AVDSYIPTPE (205 aa). The segment at 19–26 is G1; the sequence is GHVDHGKT. 19–26 lines the GTP pocket; sequence GHVDHGKT. T26 is a Mg(2+) binding site. A G2 region spans residues 60–64; sequence GITIN. Residues 81 to 84 are G3; sequence DCPG. GTP contacts are provided by residues 81-85 and 136-139; these read DCPGH and NKVD. A G4 region spans residues 136–139; the sequence is NKVD. The tract at residues 174-176 is G5; sequence SGL.

Belongs to the TRAFAC class translation factor GTPase superfamily. Classic translation factor GTPase family. EF-Tu/EF-1A subfamily. As to quaternary structure, monomer.

Its subcellular location is the cytoplasm. The catalysed reaction is GTP + H2O = GDP + phosphate + H(+). Functionally, GTP hydrolase that promotes the GTP-dependent binding of aminoacyl-tRNA to the A-site of ribosomes during protein biosynthesis. This chain is Elongation factor Tu, found in Cyanothece sp. (strain PCC 7425 / ATCC 29141).